A 472-amino-acid polypeptide reads, in one-letter code: Argininosuccinate lyase (472 aa).

The protein belongs to the lyase 1 family. Argininosuccinate lyase subfamily.

It localises to the cytoplasm. It catalyses the reaction 2-(N(omega)-L-arginino)succinate = fumarate + L-arginine. The protein operates within amino-acid biosynthesis; L-arginine biosynthesis; L-arginine from L-ornithine and carbamoyl phosphate: step 3/3. The sequence is that of Argininosuccinate lyase from Syntrophus aciditrophicus (strain SB).